A 129-amino-acid polypeptide reads, in one-letter code: Small ribosomal subunit protein uS11 (129 aa).

The protein belongs to the universal ribosomal protein uS11 family. Part of the 30S ribosomal subunit. Interacts with proteins S7 and S18. Binds to IF-3.

Its function is as follows. Located on the platform of the 30S subunit, it bridges several disparate RNA helices of the 16S rRNA. Forms part of the Shine-Dalgarno cleft in the 70S ribosome. This is Small ribosomal subunit protein uS11 from Bacillus mycoides (strain KBAB4) (Bacillus weihenstephanensis).